The primary structure comprises 382 residues: Putative glutamate--cysteine ligase 2-1 (382 aa).

Belongs to the glutamate--cysteine ligase type 2 family. YbdK subfamily.

It carries out the reaction L-cysteine + L-glutamate + ATP = gamma-L-glutamyl-L-cysteine + ADP + phosphate + H(+). ATP-dependent carboxylate-amine ligase which exhibits weak glutamate--cysteine ligase activity. The protein is Putative glutamate--cysteine ligase 2-1 of Nocardioides sp. (strain ATCC BAA-499 / JS614).